The primary structure comprises 86 residues: MKTLLLTLVVVTIVCLDLGYTMTCYTQYSLSPPTTKTCPDGQNLCYKRWFAFIPHGNKFFRGCAAACPKAEHNEVVRCCARDKCNL.

A signal peptide spans 1–21; that stretch reads MKTLLLTLVVVTIVCLDLGYT. 4 cysteine pairs are disulfide-bonded: Cys24–Cys45, Cys38–Cys63, Cys67–Cys78, and Cys79–Cys84.

The protein belongs to the three-finger toxin family. Short-chain subfamily. Aminergic toxin sub-subfamily. In terms of assembly, monomer. Expressed by the venom gland.

The protein localises to the secreted. In terms of biological role, binds to the muscarinic acetylcholine receptor (CHRM). The sequence is that of Muscarinic toxin 38 from Ophiophagus hannah (King cobra).